The chain runs to 265 residues: Gap junction beta-4 protein (265 aa).

An intramembrane segment occupies 2–13 (NWGFLQGILSGV). Over 14 to 20 (NKYSTAL) the chain is Cytoplasmic. The chain crosses the membrane as a helical span at residues 21-40 (GRIWLSVVFIFRVLVYVVAA). At 41 to 73 (EEVWDDEQKDFICNTKQPGCPNVCYDEFFPVSH) the chain is on the extracellular side. Intrachain disulfides connect C53–C175, C60–C169, and C64–C164. A helical transmembrane segment spans residues 74 to 94 (VRLWALQLILVTCPSLLVVMH). The Cytoplasmic segment spans residues 95 to 130 (VAYREERERKHRLKHGPDAPALYSNLSKKRGGLWWT). A helical transmembrane segment spans residues 131-151 (YLLSLIFKAAVDSGFLYIFHC). Topologically, residues 152-184 (IYKDYDMPRVVACSVQPCPHTVDCYISRPTEKK) are extracellular. The helical transmembrane segment at 185 to 205 (VFTYFMVVTAAICILLNLSEV) threads the bilayer. Residues 206 to 265 (AYLVGKRCMEVFRPRRQKTSRRHQLPDTCPPYVISKGHPQDESTVLTKAGMATVDAGVYP) are Cytoplasmic-facing.

It belongs to the connexin family. Beta-type (group I) subfamily. As to quaternary structure, a hemichannel or connexon is composed of a hexamer of connexins. A functional gap junction is formed by the apposition of two hemichannels. Forms heteromeric channels with GJB2. As to expression, detected in adult heart, kidney, skin and cochlea, where it is detected in spiral ganglion, stria vascularis, spiral limbus and spiral ligament (at protein level).

It localises to the cell membrane. The protein localises to the cell junction. It is found in the gap junction. Its function is as follows. Structural component of gap junctions. Gap junctions are dodecameric channels that connect the cytoplasm of adjoining cells. They are formed by the docking of two hexameric hemichannels, one from each cell membrane. Small molecules and ions diffuse from one cell to a neighboring cell via the central pore. The sequence is that of Gap junction beta-4 protein (Gjb4) from Rattus norvegicus (Rat).